Here is a 922-residue protein sequence, read N- to C-terminus: Cell cycle and apoptosis regulator protein 2 (922 aa).

Positions 1–39 are disordered; sequence MSQFKRQRINPLPGGRNFSGAASTSLLGPPPGLLTPPVA. Residue Thr-35 is modified to Phosphothreonine. The residue at position 112 (Lys-112) is an N6-acetyllysine; by KAT8. Lys-123 is modified (N6-methyllysine). Position 124 is a phosphoserine (Ser-124). Disordered stretches follow at residues 178–219, 280–307, 446–508, and 567–638; these read LNRF…KPRH, RIQVSSEKEAAPDTGAEPSPEDSDPTYS, KATE…EPAV, and VSPP…RGEA. Arg-180 bears the Omega-N-methylarginine mark. A compositionally biased stretch (basic and acidic residues) spans 188 to 200; sequence GRLDQGRSDDYDS. N6-acetyllysine; by KAT8 is present on Lys-215. Over residues 473 to 491 the composition is skewed to polar residues; the sequence is QADTSKQNTETMEATTQQD. The residue at position 483 (Thr-483) is a Phosphothreonine. Ser-568 carries the post-translational modification Phosphoserine. Residues 571–601 are compositionally biased toward basic and acidic residues; sequence EPEKEEAAKEDAVKEEEAVKEEAVKVSKDEV. Positions 573–596 form a coiled coil; sequence EKEEAAKEDAVKEEEAVKEEAVKV. A Glycyl lysine isopeptide (Lys-Gly) (interchain with G-Cter in SUMO2 and SUMO3); alternate cross-link involves residue Lys-590. A Glycyl lysine isopeptide (Lys-Gly) (interchain with G-Cter in SUMO2); alternate cross-link involves residue Lys-590. The interval 609–669 is interaction with MCC; sequence ESDSPLKEDG…DEFAGAKLEE (61 aa). A phosphoserine mark is found at Ser-612, Ser-626, Ser-674, Ser-677, and Ser-680. Tyr-684 is modified (phosphotyrosine). A phosphoserine mark is found at Ser-686 and Ser-807. The interval 703-922 is interaction with NR1D1; sequence DCLLAFVFFD…VEKEEPTPSN (220 aa). Residues 828-898 adopt a coiled-coil conformation; the sequence is LENKIHTLEL…QDFRRRLTPL (71 aa). Phosphothreonine is present on Thr-896.

Component of the DBIRD complex. Interacts with ZNF326/ZIRD; the interaction is direct. Interacts (via N-terminus) with SIRT1, which inhibits the deacetylation of substrates. Interacts (via N-terminus) with SUV39H1; this interaction abolishes the interaction with SIRT1. Component of a nuclear receptor-mediated transcription complex composed of at least ZNF335, CCAR2 and EMSY; the complex stimulates the transcription of nuclear receptor target genes such as SOX9 and HOXA1. Within the complex interacts with EMSY and interacts with ZNF335 (via C-terminus). Components of this complex may associate with components of a histone methylation complex to form a complex at least composed of ZNF335, HCFC1, CCAR2, EMSY, MKI67, RBBP5, ASH2L and WDR5. Within this complex, interacts with ASH2L. Interacts with NR1D1. Interacts (via N-terminus) with ESR1 and ESR2. Interacts (via N-terminus) with HDAC3 (via C-terminus). Interacts with HDAC1 and MED2F. Interacts with MCC. Interacts (via N-terminus) with NR1H2 and NR1H3 in a ligand-independent manner. Interacts with CSNK2A1. Interacts (via N-terminus) with p53/TP53. Interacts (via N-terminus) with BRCA1 (via the BRCT domains). Interacts (via N-terminus) with CHEK2 (via protein kinase domain). Interacts with PSEM3. Interacts (via N-terminus) with PSIA3 and SENP1. The sumoylated form shows a preferential interaction with SIRT1 as compared to its unmodified form. Interacts with CECR2; may form part of the CERF-1 and/or CEF-5 ISWI chromatin remodeling complexes in embryonic stem cells. Acetylation at Lys-112 and Lys-215 by KAT8 prevents inhibitory binding to SIRT1 and increases its deacetylase activity. In terms of processing, genotoxic stress induces its sumoylation and sumoylation promotes the SIRT1-CCAR2 interaction which in turn inhibits SIRT1-mediated deacetylation of p53/TP53. Sumoylation leads to transcriptional activation of p53/TP53 by sequestering SIRT1 from p53/TP53. Desumoylated by SENP1.

It is found in the nucleus. The protein localises to the cytoplasm. The protein resides in the cytoskeleton. It localises to the spindle. In terms of biological role, core component of the DBIRD complex, a multiprotein complex that acts at the interface between core mRNP particles and RNA polymerase II (RNAPII) and integrates transcript elongation with the regulation of alternative splicing: the DBIRD complex affects local transcript elongation rates and alternative splicing of a large set of exons embedded in (A + T)-rich DNA regions. Inhibits SIRT1 deacetylase activity leading to increasing levels of p53/TP53 acetylation and p53-mediated apoptosis. Inhibits SUV39H1 methyltransferase activity. Mediates ligand-dependent transcriptional activation by nuclear hormone receptors. Plays a critical role in maintaining genomic stability and cellular integrity following UV-induced genotoxic stress. Regulates the circadian expression of the core clock components NR1D1 and BMAL1. Enhances the transcriptional repressor activity of NR1D1 through stabilization of NR1D1 protein levels by preventing its ubiquitination and subsequent degradation. Represses the ligand-dependent transcriptional activation function of ESR2. Acts as a regulator of PCK1 expression and gluconeogenesis by a mechanism that involves, at least in part, both NR1D1 and SIRT1. Negatively regulates the deacetylase activity of HDAC3 and can alter its subcellular localization. Positively regulates the beta-catenin pathway (canonical Wnt signaling pathway) and is required for MCC-mediated repression of the beta-catenin pathway. Represses ligand-dependent transcriptional activation function of NR1H2 and NR1H3 and inhibits the interaction of SIRT1 with NR1H3. Plays an important role in tumor suppression through p53/TP53 regulation; stabilizes p53/TP53 by affecting its interaction with ubiquitin ligase MDM2. Represses the transcriptional activator activity of BRCA1. Inhibits SIRT1 in a CHEK2 and PSEM3-dependent manner and inhibits the activity of CHEK2 in vitro. This is Cell cycle and apoptosis regulator protein 2 (Ccar2) from Mus musculus (Mouse).